Reading from the N-terminus, the 289-residue chain is Phosphatidylglycerol--prolipoprotein diacylglyceryl transferase (289 aa).

7 consecutive transmembrane segments (helical) span residues 17 to 37 (LAVR…ILLG), 57 to 77 (MLFY…IFFY), 89 to 109 (IFAV…VIAA), 121 to 141 (WLVV…AGRI), 174 to 194 (QLYE…IYSA), 200 to 220 (GAVS…AEFF), and 235 to 255 (ISMG…MLVW). Arg140 lines the a 1,2-diacyl-sn-glycero-3-phospho-(1'-sn-glycerol) pocket.

Belongs to the Lgt family.

The protein resides in the cell inner membrane. The catalysed reaction is L-cysteinyl-[prolipoprotein] + a 1,2-diacyl-sn-glycero-3-phospho-(1'-sn-glycerol) = an S-1,2-diacyl-sn-glyceryl-L-cysteinyl-[prolipoprotein] + sn-glycerol 1-phosphate + H(+). The protein operates within protein modification; lipoprotein biosynthesis (diacylglyceryl transfer). Catalyzes the transfer of the diacylglyceryl group from phosphatidylglycerol to the sulfhydryl group of the N-terminal cysteine of a prolipoprotein, the first step in the formation of mature lipoproteins. This Nitrosospira multiformis (strain ATCC 25196 / NCIMB 11849 / C 71) protein is Phosphatidylglycerol--prolipoprotein diacylglyceryl transferase.